The sequence spans 1050 residues: Atrial natriuretic peptide receptor 2 (1050 aa).

The first 19 residues, 1 to 19, serve as a signal peptide directing secretion; that stretch reads MDLGHSLFVVFTCFLMARC. Residues 20 to 460 are Extracellular-facing; sequence RTEIGKNITV…FCNEDQLPVL (441 aa). Residues Asn-26 and Asn-74 are each glycosylated (N-linked (GlcNAc...) asparagine). Cysteines 84 and 110 form a disulfide. 6 N-linked (GlcNAc...) asparagine glycosylation sites follow: Asn-169, Asn-203, Asn-285, Asn-352, Asn-366, and Asn-415. Cys-236 and Cys-339 form a disulfide bridge. Residues 461–481 form a helical membrane-spanning segment; the sequence is GIVAVGSGLALIIFGISSFLI. The Cytoplasmic segment spans residues 482-1050; that stretch reads YRKLKLEKEL…LGEKTDVYVI (569 aa). In terms of domain architecture, Protein kinase spans 517 to 790; the sequence is SRLTISQRGS…PDFSYIKIFV (274 aa). One can recognise a Guanylate cyclase domain in the interval 865 to 995; the sequence is TIYFSDIVGF…DTVNTASRME (131 aa).

Belongs to the adenylyl cyclase class-4/guanylyl cyclase family. In terms of processing, phosphorylated. Phosphorylation of the protein kinase-like domain is required for full activation by CNP. Glycosylated. As to expression, high levels found in liver, atrium and gill. Moderate levels found in brain and ventricle, and low levels in esophageal sphincter, stomach, posterior intestine and kidney.

It localises to the cell membrane. The enzyme catalyses GTP = 3',5'-cyclic GMP + diphosphate. Its function is as follows. Receptor for the C-type natriuretic peptide NPPC/CNP hormone. Has guanylate cyclase activity upon binding of its ligand. May play a role in the regulation of skeletal growth. This Anguilla japonica (Japanese eel) protein is Atrial natriuretic peptide receptor 2 (npr2).